The sequence spans 631 residues: ATP-dependent RNA helicase mrh4, mitochondrial (631 aa).

The transit peptide at 1-45 directs the protein to the mitochondrion; it reads MNRLGRLPLPLPPSVCLFCQSRATTPLPPSLQATRSMATARLRRR. The interval 68–111 is disordered; sequence KERFGPFAGMNQTEARIRDKPRTRSRAAQKRSGEPEEDSQKESP. A compositionally biased stretch (basic and acidic residues) spans 98–108; sequence RSGEPEEDSQK. A Q motif motif is present at residues 141 to 174; it reads TSFDQFQLLPVVRNSISSQALPGLVDVTPTPIQR. Over residues 180–193 the composition is skewed to basic and acidic residues; the sequence is LLEEPKTEKKPTKA. Residues 180 to 199 form a disordered region; the sequence is LLEEPKTEKKPTKADDDEPQ. A Helicase ATP-binding domain is found at 194–406; the sequence is DDDEPQYDQY…RKRYPDIKRL (213 aa). Residue 207 to 214 participates in ATP binding; sequence AETGSGKT. The segment at 229-249 is disordered; that stretch reads EARDKELEKKEQEEKAREREE. Positions 353–356 match the DEAD box motif; the sequence is DEAD. The Helicase C-terminal domain maps to 455–631; it reads GPYASYVAPK…EGMFRGQALI (177 aa).

It belongs to the DEAD box helicase family. MRH4 subfamily.

It localises to the mitochondrion. It carries out the reaction ATP + H2O = ADP + phosphate + H(+). ATP-binding RNA helicase involved in mitochondrial RNA metabolism. Required for maintenance of mitochondrial DNA. This chain is ATP-dependent RNA helicase mrh4, mitochondrial (mrh4), found in Neosartorya fischeri (strain ATCC 1020 / DSM 3700 / CBS 544.65 / FGSC A1164 / JCM 1740 / NRRL 181 / WB 181) (Aspergillus fischerianus).